The primary structure comprises 959 residues: DNA translocase FtsK 1 (959 aa).

Helical transmembrane passes span 1–21, 39–59, and 83–103; these read MGLG…WRYV, IWLA…LTSG, and GWTG…PMVF. The Cytoplasmic portion of the chain corresponds to 104 to 959; the sequence is GHSWRQLLAR…REVIAPGGGD (856 aa). A disordered region spans residues 122–427; sequence PVQADARHDE…AAPPPPAVPA (306 aa). A compositionally biased stretch (basic and acidic residues) spans 126-136; the sequence is DARHDEADDGL. Composition is skewed to low complexity over residues 220–229 and 264–286; these read ATPKAATQAP and APSA…DAPA. The span at 287–298 shows a compositional bias: pro residues; the sequence is SAPPEPAEPSPP. The segment covering 333–379 has biased composition (acidic residues); that stretch reads PEPEPEPEAETEVTPEAEAEPEAEPEAEAEPEAEAEAEAEAEAEPEA. The span at 380–403 shows a compositional bias: low complexity; the sequence is EAPAPESVAPALQEAEAATAAEAP. Residues 605–814 form the FtsK domain; the sequence is GNPVVTDLAR…FQVSSKIDSR (210 aa). 625–630 provides a ligand contact to ATP; the sequence is GSGKSV.

The protein belongs to the FtsK/SpoIIIE/SftA family. In terms of assembly, homohexamer. Forms a ring that surrounds DNA.

It is found in the cell inner membrane. Functionally, essential cell division protein that coordinates cell division and chromosome segregation. The N-terminus is involved in assembly of the cell-division machinery. The C-terminus functions as a DNA motor that moves dsDNA in an ATP-dependent manner towards the dif recombination site, which is located within the replication terminus region. Translocation stops specifically at Xer-dif sites, where FtsK interacts with the Xer recombinase, allowing activation of chromosome unlinking by recombination. FtsK orienting polar sequences (KOPS) guide the direction of DNA translocation. FtsK can remove proteins from DNA as it translocates, but translocation stops specifically at XerCD-dif site, thereby preventing removal of XerC and XerD from dif. The sequence is that of DNA translocase FtsK 1 (ftsK1) from Ralstonia nicotianae (strain ATCC BAA-1114 / GMI1000) (Ralstonia solanacearum).